The primary structure comprises 466 residues: ATP synthase subunit beta (466 aa).

ATP is bound at residue 153 to 160 (GGAGVGKT).

It belongs to the ATPase alpha/beta chains family. As to quaternary structure, F-type ATPases have 2 components, CF(1) - the catalytic core - and CF(0) - the membrane proton channel. CF(1) has five subunits: alpha(3), beta(3), gamma(1), delta(1), epsilon(1). CF(0) has three main subunits: a(1), b(2) and c(9-12). The alpha and beta chains form an alternating ring which encloses part of the gamma chain. CF(1) is attached to CF(0) by a central stalk formed by the gamma and epsilon chains, while a peripheral stalk is formed by the delta and b chains.

It localises to the cell membrane. It carries out the reaction ATP + H2O + 4 H(+)(in) = ADP + phosphate + 5 H(+)(out). Produces ATP from ADP in the presence of a proton gradient across the membrane. The catalytic sites are hosted primarily by the beta subunits. The sequence is that of ATP synthase subunit beta from Clostridium acetobutylicum (strain ATCC 824 / DSM 792 / JCM 1419 / IAM 19013 / LMG 5710 / NBRC 13948 / NRRL B-527 / VKM B-1787 / 2291 / W).